A 302-amino-acid polypeptide reads, in one-letter code: Cell division protein FtsQ (302 aa).

Residues 1–43 lie on the Cytoplasmic side of the membrane; the sequence is MRPVDKKPVDRKIERETRYLRRDPAPSRWSYRYQRLMLTPAFR. The chain crosses the membrane as a helical span at residues 44 to 64; sequence AGVRLGTPVIIIALAVAVVFG. The Periplasmic portion of the chain corresponds to 65 to 302; that stretch reads RADSRDWIMG…SMPGRSAGRG (238 aa). Residues 89–156 enclose the POTRA domain; that stretch reads FMVGSFAITG…GVLQIVIEER (68 aa).

Belongs to the FtsQ/DivIB family. FtsQ subfamily.

Its subcellular location is the cell inner membrane. Essential cell division protein. The chain is Cell division protein FtsQ from Ketogulonicigenium vulgare (strain Y25).